Here is a 60-residue protein sequence, read N- to C-terminus: Potassium channel toxin MeuTXKalpha3 (60 aa).

The signal sequence occupies residues 1–22 (MKNYCGIITLFLAIISATGVFC). 3 disulfides stabilise this stretch: Cys-32/Cys-50, Cys-37/Cys-55, and Cys-41/Cys-57. At Pro-59 the chain carries Proline amide.

The protein belongs to the short scorpion toxin superfamily. Potassium channel inhibitor family. In terms of tissue distribution, expressed by the venom gland.

It localises to the secreted. May block voltage-gated potassium channels (Kv). The polypeptide is Potassium channel toxin MeuTXKalpha3 (Mesobuthus eupeus (Lesser Asian scorpion)).